The sequence spans 220 residues: Histone deacetylase complex subunit SAP30 (220 aa).

The tract at residues 1–129 (MNGFTPEEMS…QSVRNRRKRK (129 aa)) is interaction with NCOR1. Position 5 is a phosphothreonine (Thr-5). An Atypical zinc finger spans residues 67–115 (CCLREDGERCGRAAGNASFSKRIQKSISQKKVKIELDKSARHLYICDYH). A Glycyl lysine isopeptide (Lys-Gly) (interchain with G-Cter in SUMO2) cross-link involves residue Lys-87. The segment at 123-143 (RNRRKRKGSDDDGGDSPVQDI) is disordered. The tract at residues 130 to 220 (GSDDDGGDSP…SDLKADSGVH (91 aa)) is interaction with SIN3A. A phosphoserine mark is found at Ser-131 and Ser-138. Residue Thr-145 is modified to Phosphothreonine. Glycyl lysine isopeptide (Lys-Gly) (interchain with G-Cter in SUMO2) cross-links involve residues Lys-194 and Lys-214.

It belongs to the SAP30 family. As to quaternary structure, component of the histone deacetylase complex that includes at least SIN3A, HDAC1 and HDAC2. Found in a complex composed of at least SINHCAF, SIN3A, HDAC1, SAP30, RBBP4, OGT and TET1. Interacts with HDAC1. Interacts with SIN3A, SIN3B, HDAC2, RBBP4 and NCOR1. Interacts directly with SAMSN1. Interacts with HCFC1. Interacts with SAP30BP.

It localises to the nucleus. Functionally, involved in the functional recruitment of the Sin3-histone deacetylase complex (HDAC) to a specific subset of N-CoR corepressor complexes. Capable of transcription repression by N-CoR. Active in deacetylating core histone octamers (when in a complex) but inactive in deacetylating nucleosomal histones. The polypeptide is Histone deacetylase complex subunit SAP30 (Mus musculus (Mouse)).